Consider the following 101-residue polypeptide: Urease subunit gamma (101 aa).

It belongs to the urease gamma subunit family. As to quaternary structure, heterotrimer of UreA (gamma), UreB (beta) and UreC (alpha) subunits. Three heterotrimers associate to form the active enzyme.

The protein resides in the cytoplasm. It carries out the reaction urea + 2 H2O + H(+) = hydrogencarbonate + 2 NH4(+). Its pathway is nitrogen metabolism; urea degradation; CO(2) and NH(3) from urea (urease route): step 1/1. The chain is Urease subunit gamma from Ureaplasma urealyticum (Ureaplasma urealyticum biotype 2).